Reading from the N-terminus, the 248-residue chain is Probable transcriptional regulatory protein RPE_4771 (248 aa).

The segment at 1 to 21 is disordered; it reads MAGHSQFKNIMHRKGRQDAQK.

The protein belongs to the TACO1 family.

The protein localises to the cytoplasm. The protein is Probable transcriptional regulatory protein RPE_4771 of Rhodopseudomonas palustris (strain BisA53).